Here is a 218-residue protein sequence, read N- to C-terminus: Telomere repeats-binding bouquet formation protein 2 (218 aa).

The interval 117–143 (HDRMASSDKENIRPTPEHKQELSKSAE) is disordered.

This sequence belongs to the TERB2 family. As to quaternary structure, component of the MAJIN-TERB1-TERB2 complex, composed of MAJIN, TERB1 and TERB2. Specifically expressed in germline tissues.

The protein resides in the chromosome. The protein localises to the telomere. It is found in the nucleus inner membrane. Meiosis-specific telomere-associated protein involved in meiotic telomere attachment to the nucleus inner membrane, a crucial step for homologous pairing and synapsis. Component of the MAJIN-TERB1-TERB2 complex, which promotes telomere cap exchange by mediating attachment of telomeric DNA to the inner nuclear membrane and replacement of the protective cap of telomeric chromosomes: in early meiosis, the MAJIN-TERB1-TERB2 complex associates with telomeric DNA and the shelterin/telosome complex. During prophase, the complex matures and promotes release of the shelterin/telosome complex from telomeric DNA. This Mus musculus (Mouse) protein is Telomere repeats-binding bouquet formation protein 2.